A 256-amino-acid chain; its full sequence is Anamorsin homolog (256 aa).

Residues 1 to 136 (MNSLSLELNK…DTNESSTINI (136 aa)) are N-terminal SAM-like domain. Residues 126–148 (WDTNESSTINIPSTSSNNPWASI) form a disordered region. Positions 131–144 (SSTINIPSTSSNNP) are enriched in low complexity. The interval 137 to 166 (PSTSSNNPWASIEGGDRINENDLVSENDKT) is linker. [2Fe-2S] cluster contacts are provided by cysteine 176, cysteine 185, cysteine 188, and cysteine 190. A fe-S binding site A region spans residues 176 to 190 (CEVGKTKKACKNCTC). Residues cysteine 217, cysteine 220, cysteine 228, and cysteine 231 each coordinate [4Fe-4S] cluster. Short sequence motifs (cx2C motif) lie at residues 217 to 220 (CGNC) and 228 to 231 (CGGC). Residues 217-231 (CGNCSLGDAFRCGGC) are fe-S binding site B.

Belongs to the anamorsin family. As to quaternary structure, monomer. It depends on [2Fe-2S] cluster as a cofactor. Requires [4Fe-4S] cluster as cofactor.

The protein resides in the cytoplasm. Its subcellular location is the mitochondrion intermembrane space. Component of the cytosolic iron-sulfur (Fe-S) protein assembly (CIA) machinery. Required for the maturation of extramitochondrial Fe-S proteins. Part of an electron transfer chain functioning in an early step of cytosolic Fe-S biogenesis, facilitating the de novo assembly of a [4Fe-4S] cluster on the cytosolic Fe-S scaffold complex. Electrons are transferred from NADPH via a FAD- and FMN-containing diflavin oxidoreductase. Together with the diflavin oxidoreductase, also required for the assembly of the diferric tyrosyl radical cofactor of ribonucleotide reductase (RNR), probably by providing electrons for reduction during radical cofactor maturation in the catalytic small subunit. In Dictyostelium discoideum (Social amoeba), this protein is Anamorsin homolog (rsc43).